A 1065-amino-acid chain; its full sequence is Carbamoyl phosphate synthase large chain (1065 aa).

A carboxyphosphate synthetic domain region spans residues 1-401 (MPKRTDIETI…AMLKAVRSLE (401 aa)). ATP is bound by residues Arg129, Arg169, Gly175, Gly176, Lys208, Ile210, Glu215, Gly241, Ile242, His243, Gln284, and Glu298. The 195-residue stretch at 133–327 (RNLMYELGAP…IAKLAAKIAV (195 aa)) folds into the ATP-grasp 1 domain. Residues Gln284, Glu298, and Asn300 each contribute to the Mg(2+) site. The Mn(2+) site is built by Gln284, Glu298, and Asn300. The segment at 402 to 546 (TGQVHLELKH…YGTYEEENES (145 aa)) is oligomerization domain. A carbamoyl phosphate synthetic domain region spans residues 547–929 (IKSEKPSVVV…ALYKGLVAAG (383 aa)). One can recognise an ATP-grasp 2 domain in the interval 671–861 (EQALRDLNIP…MANIATKAIL (191 aa)). Residues Arg707, Arg746, Leu748, Glu752, Gly777, Val778, His779, Ser780, Gln820, and Glu832 each coordinate ATP. Mg(2+) is bound by residues Gln820, Glu832, and Asn834. Residues Gln820, Glu832, and Asn834 each coordinate Mn(2+). One can recognise an MGS-like domain in the interval 930–1065 (MEIRTEGTVL…EEMPKAEVVH (136 aa)). The interval 930–1065 (MEIRTEGTVL…EEMPKAEVVH (136 aa)) is allosteric domain.

It belongs to the CarB family. Composed of two chains; the small (or glutamine) chain promotes the hydrolysis of glutamine to ammonia, which is used by the large (or ammonia) chain to synthesize carbamoyl phosphate. Tetramer of heterodimers (alpha,beta)4. Mg(2+) serves as cofactor. It depends on Mn(2+) as a cofactor.

The catalysed reaction is hydrogencarbonate + L-glutamine + 2 ATP + H2O = carbamoyl phosphate + L-glutamate + 2 ADP + phosphate + 2 H(+). The enzyme catalyses hydrogencarbonate + NH4(+) + 2 ATP = carbamoyl phosphate + 2 ADP + phosphate + 2 H(+). The protein operates within amino-acid biosynthesis; L-arginine biosynthesis; carbamoyl phosphate from bicarbonate: step 1/1. It functions in the pathway pyrimidine metabolism; UMP biosynthesis via de novo pathway; (S)-dihydroorotate from bicarbonate: step 1/3. In terms of biological role, large subunit of the glutamine-dependent carbamoyl phosphate synthetase (CPSase). CPSase catalyzes the formation of carbamoyl phosphate from the ammonia moiety of glutamine, carbonate, and phosphate donated by ATP, constituting the first step of 2 biosynthetic pathways, one leading to arginine and/or urea and the other to pyrimidine nucleotides. The large subunit (synthetase) binds the substrates ammonia (free or transferred from glutamine from the small subunit), hydrogencarbonate and ATP and carries out an ATP-coupled ligase reaction, activating hydrogencarbonate by forming carboxy phosphate which reacts with ammonia to form carbamoyl phosphate. The sequence is that of Carbamoyl phosphate synthase large chain from Lysinibacillus sphaericus (strain C3-41).